Reading from the N-terminus, the 195-residue chain is MTADEVVALYKEDGALLHGHFLLSSGLHSDTYLQSARVLQYPGHAARLCAAMVAGIPDDLRRRISCVVGPAMGAVLVSYECGRALGVRSLFTEREAGQMVLRRGFVLAPGEGVLVVEDITTTGGSTRECMAAVTAAGGQVLAASAIIDRSSGFSDFDGAPFFPLLKLPVLTWEAAACPLCAAGGTPVKPGSRGLS.

117–125 provides a ligand contact to 5-phospho-alpha-D-ribose 1-diphosphate; that stretch reads EDITTTGGS. Orotate-binding residues include T121 and R149.

The protein belongs to the purine/pyrimidine phosphoribosyltransferase family. PyrE subfamily. In terms of assembly, homodimer. It depends on Mg(2+) as a cofactor.

It catalyses the reaction orotidine 5'-phosphate + diphosphate = orotate + 5-phospho-alpha-D-ribose 1-diphosphate. It functions in the pathway pyrimidine metabolism; UMP biosynthesis via de novo pathway; UMP from orotate: step 1/2. Its function is as follows. Catalyzes the transfer of a ribosyl phosphate group from 5-phosphoribose 1-diphosphate to orotate, leading to the formation of orotidine monophosphate (OMP). This is Orotate phosphoribosyltransferase from Acidithiobacillus ferrooxidans (strain ATCC 53993 / BNL-5-31) (Leptospirillum ferrooxidans (ATCC 53993)).